We begin with the raw amino-acid sequence, 286 residues long: 33 kDa chaperonin (286 aa).

Intrachain disulfides connect Cys225–Cys227 and Cys258–Cys261.

This sequence belongs to the HSP33 family. Post-translationally, under oxidizing conditions two disulfide bonds are formed involving the reactive cysteines. Under reducing conditions zinc is bound to the reactive cysteines and the protein is inactive.

The protein localises to the cytoplasm. In terms of biological role, redox regulated molecular chaperone. Protects both thermally unfolding and oxidatively damaged proteins from irreversible aggregation. Plays an important role in the bacterial defense system toward oxidative stress. The sequence is that of 33 kDa chaperonin from Shewanella loihica (strain ATCC BAA-1088 / PV-4).